The sequence spans 267 residues: Phosphonates import ATP-binding protein PhnC 2 (267 aa).

The region spanning 3-247 (LSLDGVDLVH…ALDALYANEQ (245 aa)) is the ABC transporter domain. Residue 36 to 43 (GPSGAGKT) coordinates ATP.

This sequence belongs to the ABC transporter superfamily. Phosphonates importer (TC 3.A.1.9.1) family. The complex is composed of two ATP-binding proteins (PhnC), two transmembrane proteins (PhnE) and a solute-binding protein (PhnD).

It localises to the cell inner membrane. It carries out the reaction phosphonate(out) + ATP + H2O = phosphonate(in) + ADP + phosphate + H(+). Functionally, part of the ABC transporter complex PhnCDE involved in phosphonates import. Responsible for energy coupling to the transport system. In Pseudomonas aeruginosa (strain UCBPP-PA14), this protein is Phosphonates import ATP-binding protein PhnC 2.